The following is a 237-amino-acid chain: UPF0280 protein Mthe_1297 (237 aa).

The protein belongs to the UPF0280 family.

This Methanothrix thermoacetophila (strain DSM 6194 / JCM 14653 / NBRC 101360 / PT) (Methanosaeta thermophila) protein is UPF0280 protein Mthe_1297.